We begin with the raw amino-acid sequence, 166 residues long: Nucleotide-binding protein SUN_0226 (166 aa).

The protein belongs to the YajQ family.

Its function is as follows. Nucleotide-binding protein. This chain is Nucleotide-binding protein SUN_0226, found in Sulfurovum sp. (strain NBC37-1).